The sequence spans 431 residues: Protein translocase subunit SecY 1 (431 aa).

The next 10 helical transmembrane spans lie at 18-38 (IYFTLFILLLYRIGANITVPG), 67-87 (YSIFSLGVSPYITAQIVIQLL), 115-135 (YLTLVVAFVQSIGITLGFNAL), 150-170 (VEIAIIMTAGTMLLTWLGDEI), 178-198 (GVSVIIFAGIIARLPSGLYQI), 215-235 (ILFFIAVIVAILIVTQLVTWV), 268-288 (VIPVIFASSFIVTPATILMAF), 312-332 (GVIIYTLLIILFTFFYAFVQV), 365-385 (LIKLSTVGSIFLGLVALLPQL), and 392-412 (LPSSIGLGGTSLLIVIGVVLE).

Belongs to the SecY/SEC61-alpha family. As to quaternary structure, component of the Sec protein translocase complex. Heterotrimer consisting of SecY, SecE and SecG subunits. The heterotrimers can form oligomers, although 1 heterotrimer is thought to be able to translocate proteins. Interacts with the ribosome. Interacts with SecDF, and other proteins may be involved. Interacts with SecA.

It is found in the cell membrane. Its function is as follows. The central subunit of the protein translocation channel SecYEG. Consists of two halves formed by TMs 1-5 and 6-10. These two domains form a lateral gate at the front which open onto the bilayer between TMs 2 and 7, and are clamped together by SecE at the back. The channel is closed by both a pore ring composed of hydrophobic SecY resides and a short helix (helix 2A) on the extracellular side of the membrane which forms a plug. The plug probably moves laterally to allow the channel to open. The ring and the pore may move independently. This is Protein translocase subunit SecY 1 from Lactobacillus kefiranofaciens subsp. kefiranofaciens.